The following is a 437-amino-acid chain: ATP-dependent protease ATPase subunit HslU (437 aa).

ATP is bound by residues Ile18, 60 to 65 (GVGKTE), Asp250, Glu315, and Arg387.

Belongs to the ClpX chaperone family. HslU subfamily. In terms of assembly, a double ring-shaped homohexamer of HslV is capped on each side by a ring-shaped HslU homohexamer. The assembly of the HslU/HslV complex is dependent on binding of ATP.

Its subcellular location is the cytoplasm. ATPase subunit of a proteasome-like degradation complex; this subunit has chaperone activity. The binding of ATP and its subsequent hydrolysis by HslU are essential for unfolding of protein substrates subsequently hydrolyzed by HslV. HslU recognizes the N-terminal part of its protein substrates and unfolds these before they are guided to HslV for hydrolysis. This Dinoroseobacter shibae (strain DSM 16493 / NCIMB 14021 / DFL 12) protein is ATP-dependent protease ATPase subunit HslU.